Consider the following 489-residue polypeptide: DBIRD complex subunit ZNF326 (489 aa).

4 disordered regions span residues 1–28 (MDRE…EMGD), 62–100 (EQGH…PSFT), 133–181 (VGSR…RPGL), and 205–263 (PPFK…KNSE). Residues 7–22 (SYNQRSMDSYGNQSYS) are compositionally biased toward polar residues. The span at 62-76 (EQGHFGDSYDGRYEN) shows a compositional bias: basic and acidic residues. The segment covering 91–100 (GGSSWDPSFT) has biased composition (polar residues). The Bipartite nuclear localization signal motif lies at 200 to 221 (KRKMAPPFKPVGVFGKKQKLSK). 2 C2H2 AKAP95-type zinc fingers span residues 273 to 295 (CSFC…STTH) and 365 to 388 (CSAC…SADH). The disordered stretch occupies residues 431–489 (ETQPEEQQQEQEEEEEEEEQQEQAAVPEQDLSEEQPAAIAAEPEGEDFTCDPLTTTDEV). Over residues 433–451 (QPEEQQQEQEEEEEEEEQQ) the composition is skewed to acidic residues.

The protein belongs to the AKAP95 family. In terms of assembly, component of the DBIRD complex.

Its subcellular location is the nucleus. Its function is as follows. Core component of the DBIRD complex, a multiprotein complex that acts at the interface between core mRNP particles and RNA polymerase II (RNAPII) and integrates transcript elongation with the regulation of alternative splicing. The polypeptide is DBIRD complex subunit ZNF326 (znf326) (Xenopus tropicalis (Western clawed frog)).